We begin with the raw amino-acid sequence, 469 residues long: 3-isopropylmalate dehydratase large subunit (469 aa).

3 residues coordinate [4Fe-4S] cluster: Cys350, Cys410, and Cys413.

This sequence belongs to the aconitase/IPM isomerase family. LeuC type 1 subfamily. In terms of assembly, heterodimer of LeuC and LeuD. The cofactor is [4Fe-4S] cluster.

It catalyses the reaction (2R,3S)-3-isopropylmalate = (2S)-2-isopropylmalate. Its pathway is amino-acid biosynthesis; L-leucine biosynthesis; L-leucine from 3-methyl-2-oxobutanoate: step 2/4. Catalyzes the isomerization between 2-isopropylmalate and 3-isopropylmalate, via the formation of 2-isopropylmaleate. This Brucella anthropi (strain ATCC 49188 / DSM 6882 / CCUG 24695 / JCM 21032 / LMG 3331 / NBRC 15819 / NCTC 12168 / Alc 37) (Ochrobactrum anthropi) protein is 3-isopropylmalate dehydratase large subunit.